A 140-amino-acid chain; its full sequence is MALPKANRLKSRHDFQAVFREGLRRNSSHFTLRALKPSSARKSSLDTAAQTQPVDEVQNIPSTLIGVSISTKVSKRAVVRNRIKRQITAAMQQLLPRLAPGWKLVVIVKPTAAESKCGSQQFLQELEQLLAQTEVLHGHS.

This sequence belongs to the RnpA family. As to quaternary structure, consists of a catalytic RNA component (M1 or rnpB) and a protein subunit.

The catalysed reaction is Endonucleolytic cleavage of RNA, removing 5'-extranucleotides from tRNA precursor.. In terms of biological role, RNaseP catalyzes the removal of the 5'-leader sequence from pre-tRNA to produce the mature 5'-terminus. It can also cleave other RNA substrates such as 4.5S RNA. The protein component plays an auxiliary but essential role in vivo by binding to the 5'-leader sequence and broadening the substrate specificity of the ribozyme. In Nostoc sp. (strain PCC 7120 / SAG 25.82 / UTEX 2576), this protein is Ribonuclease P protein component.